The sequence spans 145 residues: Cuticle protein 65 (145 aa).

Repeat copies occupy residues 27–30 (AAPA), 33–37 (AAPAV), 39–42 (AAPA), 86–89 (AAPV), 92–95 (AAPA), 98–101 (AAPA), and 123–126 (AAPA).

In terms of biological role, component of the cuticle of migratory locust which contains more than 100 different structural proteins. This chain is Cuticle protein 65, found in Locusta migratoria (Migratory locust).